The primary structure comprises 55 residues: UPF0391 membrane protein Neut_2351/Neut_2360 (55 aa).

Helical transmembrane passes span 4–24 (LAVV…TGVA) and 28–48 (AEMA…FWVL).

It belongs to the UPF0391 family.

It localises to the cell membrane. The sequence is that of UPF0391 membrane protein Neut_2351/Neut_2360 from Nitrosomonas eutropha (strain DSM 101675 / C91 / Nm57).